We begin with the raw amino-acid sequence, 343 residues long: Methylthioribose-1-phosphate isomerase (343 aa).

Residues 48–50, Arg88, and Gln193 contribute to the substrate site; that span reads RGA. The Proton donor role is filled by Asp234. 244 to 245 contacts substrate; it reads NK.

Belongs to the eIF-2B alpha/beta/delta subunits family. MtnA subfamily.

It carries out the reaction 5-(methylsulfanyl)-alpha-D-ribose 1-phosphate = 5-(methylsulfanyl)-D-ribulose 1-phosphate. Its pathway is amino-acid biosynthesis; L-methionine biosynthesis via salvage pathway; L-methionine from S-methyl-5-thio-alpha-D-ribose 1-phosphate: step 1/6. Functionally, catalyzes the interconversion of methylthioribose-1-phosphate (MTR-1-P) into methylthioribulose-1-phosphate (MTRu-1-P). In Thermotoga maritima (strain ATCC 43589 / DSM 3109 / JCM 10099 / NBRC 100826 / MSB8), this protein is Methylthioribose-1-phosphate isomerase.